The sequence spans 154 residues: Nucleoside diphosphate kinase (154 aa).

6 residues coordinate ATP: Lys-12, Phe-60, Arg-88, Thr-94, Arg-105, and Asn-115. Residue His-118 is the Pros-phosphohistidine intermediate of the active site.

This sequence belongs to the NDK family. Mg(2+) serves as cofactor.

It is found in the cytoplasm. The enzyme catalyses a 2'-deoxyribonucleoside 5'-diphosphate + ATP = a 2'-deoxyribonucleoside 5'-triphosphate + ADP. It carries out the reaction a ribonucleoside 5'-diphosphate + ATP = a ribonucleoside 5'-triphosphate + ADP. Major role in the synthesis of nucleoside triphosphates other than ATP. The ATP gamma phosphate is transferred to the NDP beta phosphate via a ping-pong mechanism, using a phosphorylated active-site intermediate. This Haloarcula marismortui (strain ATCC 43049 / DSM 3752 / JCM 8966 / VKM B-1809) (Halobacterium marismortui) protein is Nucleoside diphosphate kinase.